The following is a 116-amino-acid chain: Large ribosomal subunit protein bL17 (116 aa).

Belongs to the bacterial ribosomal protein bL17 family. In terms of assembly, part of the 50S ribosomal subunit. Contacts protein L32.

This chain is Large ribosomal subunit protein bL17, found in Trichodesmium erythraeum (strain IMS101).